The primary structure comprises 228 residues: Phosphoglycolate phosphatase (228 aa).

The Nucleophile role is filled by Asp9. 2 residues coordinate Mg(2+): Asp9 and Asp11. Lys151 is a substrate binding site. Residues Asp174 and Asp178 each coordinate Mg(2+).

It belongs to the archaeal SPP-like hydrolase family. Mg(2+) is required as a cofactor.

It carries out the reaction 2-phosphoglycolate + H2O = glycolate + phosphate. Its function is as follows. Catalyzes the dephosphorylation of 2-phosphoglycolate. The protein is Phosphoglycolate phosphatase of Pyrobaculum neutrophilum (strain DSM 2338 / JCM 9278 / NBRC 100436 / V24Sta) (Thermoproteus neutrophilus).